The sequence spans 288 residues: Diaminopimelate epimerase (288 aa).

Positions 14 and 67 each coordinate substrate. Cysteine 76 serves as the catalytic Proton donor. Residues 77-78 (GN), asparagine 166, asparagine 199, and 217-218 (ER) contribute to the substrate site. Residue cysteine 226 is the Proton acceptor of the active site. 227-228 (GT) serves as a coordination point for substrate.

Belongs to the diaminopimelate epimerase family. In terms of assembly, homodimer.

Its subcellular location is the cytoplasm. The enzyme catalyses (2S,6S)-2,6-diaminopimelate = meso-2,6-diaminopimelate. It participates in amino-acid biosynthesis; L-lysine biosynthesis via DAP pathway; DL-2,6-diaminopimelate from LL-2,6-diaminopimelate: step 1/1. In terms of biological role, catalyzes the stereoinversion of LL-2,6-diaminopimelate (L,L-DAP) to meso-diaminopimelate (meso-DAP), a precursor of L-lysine and an essential component of the bacterial peptidoglycan. The chain is Diaminopimelate epimerase from Bacillus anthracis (strain A0248).